We begin with the raw amino-acid sequence, 434 residues long: ATP-sensitive inward rectifier potassium channel 14 (434 aa).

The Cytoplasmic portion of the chain corresponds to 1 to 81 (MGLARALRRL…LSDLFTTCVD (81 aa)). Position 79 is an S-nitrosocysteine (cysteine 79). The chain crosses the membrane as a helical span at residues 82–108 (VRWRWMCLLFSCSFLASWLLFGLTFWL). At 109–131 (IASLHGDLAAPPPPAPCFSQVAS) the chain is on the extracellular side. An intramembrane region (helical; Pore-forming) is located at residues 132–148 (FLAAFLFALETQTSIGY). Positions 145 to 150 (SIGYGV) match the Selectivity filter motif. Over 149 to 157 (GVRSVTEEC) the chain is Extracellular. The chain crosses the membrane as a helical span at residues 158 to 185 (PAAVAAVVLQCIAGCVLDAFVVGAVMAK). Over 186 to 434 (MAKPKKRNET…TPTLALTLPP (249 aa)) the chain is Cytoplasmic. A disordered region spans residues 398-434 (QEEDEEEDTKEGTSAETPERAASPQALTPTLALTLPP). Residues 407 to 416 (KEGTSAETPE) show a composition bias toward basic and acidic residues. The segment covering 418 to 434 (AASPQALTPTLALTLPP) has biased composition (low complexity).

It belongs to the inward rectifier-type potassium channel (TC 1.A.2.1) family. KCNJ14 subfamily.

The protein localises to the membrane. It carries out the reaction K(+)(in) = K(+)(out). Its activity is regulated as follows. Channel activity is regulated by variations of cytosolic pH; channels are activated by alkaline and inhibited by acidic pH values. Inhibited by Ba(2+) and Cs(+) in a voltage-dependent manner; sensitivity to those inhibitors is lower than in other Kir channels. Functionally, inward rectifier potassium channels are characterized by a greater tendency to allow potassium to flow into the cell rather than out of it. Their voltage dependence is regulated by the concentration of extracellular potassium; as external potassium is raised, the voltage range of the channel opening shifts to more positive voltages. The polypeptide is ATP-sensitive inward rectifier potassium channel 14 (Kcnj14) (Mus musculus (Mouse)).